We begin with the raw amino-acid sequence, 272 residues long: Centromere protein V-like protein 3 (272 aa).

Over residues 1-17 the composition is skewed to basic residues; that stretch reads MGRVRNRATAQRRRRKR. Disordered regions lie at residues 1–23 and 65–95; these read MGRV…DPPA and RRAR…KELD. Over residues 77–88 the composition is skewed to pro residues; sequence PSAPLPDPPAPA. The region spanning 133–246 is the CENP-V/GFA domain; it reads HTGGCHCGAV…EEVGGGDPGE (114 aa). The Zn(2+) site is built by Cys137, Cys139, Cys157, Cys159, Cys162, Cys201, and Cys204. The segment at 240-272 is disordered; sequence GGGDPGEEAAEEHKAIHKTSSQSAPACPREQEQ.

It belongs to the Gfa family. It depends on Zn(2+) as a cofactor.

In Homo sapiens (Human), this protein is Centromere protein V-like protein 3.